Reading from the N-terminus, the 423-residue chain is DUF21 domain-containing protein At2g14520 (423 aa).

Topologically, residues 1–11 are extracellular; it reads MAVEYECCGTS. The CNNM transmembrane domain maps to 8–191; sequence CGTSFFIHIA…GKGGELTHDE (184 aa). A helical transmembrane segment spans residues 12-32; that stretch reads FFIHIAVIVLLVLFAGLMSGL. The Cytoplasmic portion of the chain corresponds to 33-70; the sequence is TLGLMSMSLVDLEVLAKSGTPRDRIHAAKILPVVKNQH. Residues 71–91 traverse the membrane as a helical segment; sequence LLLCTLLICNAAAMEALPIFL. Topologically, residues 92–94 are extracellular; that stretch reads DAL. The helical transmembrane segment at 95–115 threads the bilayer; it reads VTAWGAILISVTLILLFGEII. Residues 116–136 are Cytoplasmic-facing; it reads PQSVCSRHGLAIGATVAPFVR. A helical membrane pass occupies residues 137–157; it reads VLVWICLPVAWPISKLLDFLL. At 158–423 the chain is on the extracellular side; sequence GHGRVALFRR…DETDHHFEDL (266 aa). Residues 210–271 enclose the CBS 1 domain; sequence MTPISDTFVI…TINPDEEIQV (62 aa). Residues N273 and N322 are each glycosylated (N-linked (GlcNAc...) asparagine). 2 CBS domains span residues 275 to 332 and 356 to 415; these read TIRR…RVDV and PNRA…IFDE.

The protein localises to the membrane. The chain is DUF21 domain-containing protein At2g14520 (CBSDUF3) from Arabidopsis thaliana (Mouse-ear cress).